A 348-amino-acid chain; its full sequence is Putative S-adenosyl-L-methionine-dependent methyltransferase Mb3432 (348 aa).

S-adenosyl-L-methionine is bound by residues aspartate 171 and 200–201 (DL).

The protein belongs to the UPF0677 family.

Its function is as follows. Exhibits S-adenosyl-L-methionine-dependent methyltransferase activity. The chain is Putative S-adenosyl-L-methionine-dependent methyltransferase Mb3432 from Mycobacterium bovis (strain ATCC BAA-935 / AF2122/97).